Here is a 242-residue protein sequence, read N- to C-terminus: 7-cyano-7-deazaguanine synthase (242 aa).

ATP is bound at residue 12–22; that stretch reads FSGGQDSATCL. Zn(2+) is bound by residues Cys200, Cys215, Cys218, and Cys221.

It belongs to the QueC family. Zn(2+) is required as a cofactor.

It carries out the reaction 7-carboxy-7-deazaguanine + NH4(+) + ATP = 7-cyano-7-deazaguanine + ADP + phosphate + H2O + H(+). Its pathway is purine metabolism; 7-cyano-7-deazaguanine biosynthesis. Catalyzes the ATP-dependent conversion of 7-carboxy-7-deazaguanine (CDG) to 7-cyano-7-deazaguanine (preQ(0)). The polypeptide is 7-cyano-7-deazaguanine synthase (Gluconobacter oxydans (strain 621H) (Gluconobacter suboxydans)).